Consider the following 458-residue polypeptide: MTTGPLPRRVALISVHTSPLAQPGTGDAGGMNVYVWQTATRLARRGVEVEIFTRATSSSDAPRVAAAPRVTVRNVVAGPFEGLDKRDLPAQLCAFTAGVLRAEAAQEPGYYDLIHSHYWLSGQVGWLARDRWGVPLVHTAHTLAAVKNASLAAGDTAEPQLRVIGEQQVVDEADRLIANTETEASELISMYGADPARIDVVTPGADLDCYTPGPREMARTSLGLDQNEAIVTFVGRIQPLKAPDLLIEAAAPLIRRSRTSRRPVRVLIVGGPSGSGLDRPTALIDLAHDLGIADAVTFLPPQAPARLADVYRASNLVAVPSHSESFGLVAIEAQACGTPVLAADVGGLSVAVAGGRTGVLVGSHAVGDWTNALEKALAQPDRLAEMGRNARVHAEQFSWDHTVDAMLSSYSRAMQSFAARNPDAAQSVAAQNVTGSSSRTRRPWRRRRSTLLPMTGRS.

Residue H16 coordinates 1D-myo-inositol 3-phosphate. UDP-N-acetyl-alpha-D-glucosamine-binding positions include 22–23 and G30; that span reads QP. Residues 27–32, K85, Y118, T142, and R162 each bind 1D-myo-inositol 3-phosphate; that span reads DAGGMN. UDP-N-acetyl-alpha-D-glucosamine is bound by residues R236, K241, and Q302. The Mg(2+) site is built by Y311, R312, and S314. Residues E324 and E332 each coordinate UDP-N-acetyl-alpha-D-glucosamine. T338 contacts Mg(2+). The interval 428–458 is disordered; sequence VAAQNVTGSSSRTRRPWRRRRSTLLPMTGRS. Residues 439–449 show a composition bias toward basic residues; the sequence is RTRRPWRRRRS.

Belongs to the glycosyltransferase group 1 family. MshA subfamily. As to quaternary structure, homodimer.

It carries out the reaction 1D-myo-inositol 3-phosphate + UDP-N-acetyl-alpha-D-glucosamine = 1D-myo-inositol 2-acetamido-2-deoxy-alpha-D-glucopyranoside 3-phosphate + UDP + H(+). Its function is as follows. Catalyzes the transfer of a N-acetyl-glucosamine moiety to 1D-myo-inositol 3-phosphate to produce 1D-myo-inositol 2-acetamido-2-deoxy-glucopyranoside 3-phosphate in the mycothiol biosynthesis pathway. This chain is D-inositol 3-phosphate glycosyltransferase, found in Gordonia bronchialis (strain ATCC 25592 / DSM 43247 / BCRC 13721 / JCM 3198 / KCTC 3076 / NBRC 16047 / NCTC 10667) (Rhodococcus bronchialis).